A 306-amino-acid chain; its full sequence is ATP-dependent (S)-NAD(P)H-hydrate dehydratase (306 aa).

One can recognise a YjeF C-terminal domain in the interval 4-300 (LIDLFKPMIP…NQISNGFEDL (297 aa)). Residues Gly-104 and 157–163 (NFVEFKS) each bind (6S)-NADPHX. ATP-binding positions include 197-201 (KGKED) and 216-225 (GMPRRCGGQG). Position 226 (Asp-226) interacts with (6S)-NADPHX.

Belongs to the NnrD/CARKD family. Requires Mg(2+) as cofactor.

It catalyses the reaction (6S)-NADHX + ATP = ADP + phosphate + NADH + H(+). It carries out the reaction (6S)-NADPHX + ATP = ADP + phosphate + NADPH + H(+). Catalyzes the dehydration of the S-form of NAD(P)HX at the expense of ATP, which is converted to ADP. Together with NAD(P)HX epimerase, which catalyzes the epimerization of the S- and R-forms, the enzyme allows the repair of both epimers of NAD(P)HX, a damaged form of NAD(P)H that is a result of enzymatic or heat-dependent hydration. The protein is ATP-dependent (S)-NAD(P)H-hydrate dehydratase of Dictyostelium discoideum (Social amoeba).